The following is a 245-amino-acid chain: Precorrin-2 C(20)-methyltransferase (245 aa).

Belongs to the precorrin methyltransferase family. Homodimer.

The enzyme catalyses precorrin-2 + S-adenosyl-L-methionine = precorrin-3A + S-adenosyl-L-homocysteine + H(+). It participates in cofactor biosynthesis; adenosylcobalamin biosynthesis; cob(II)yrinate a,c-diamide from precorrin-2 (aerobic route): step 1/10. Functionally, methylates precorrin-2 at the C-20 position to produce precorrin-3A. In Sinorhizobium sp, this protein is Precorrin-2 C(20)-methyltransferase (cobI).